The sequence spans 381 residues: Periphilin-1 (381 aa).

Composition is skewed to basic and acidic residues over residues 1-28 (MWSEGRYDYDRLPRERVPPRSHPSDGYH), 39-65 (PLLDKRPPLLDKRPPLLARPDEGGYSR), and 79-121 (RSFS…DGFR). Disordered stretches follow at residues 1-65 (MWSE…GYSR) and 79-260 (RSFS…KSDE). The Nuclear localization signal motif lies at 117–123 (RDGFRRK). Lysine 123 participates in a covalent cross-link: Glycyl lysine isopeptide (Lys-Gly) (interchain with G-Cter in SUMO2). 4 positions are modified to phosphoserine: serine 124, serine 128, serine 147, and serine 154. Over residues 130 to 156 (YSRDRSPHKRDAPFFRESPVGRKDSPH) the composition is skewed to basic and acidic residues. Low complexity predominate over residues 157–168 (SRSGSSVSSRSY). Basic residues predominate over residues 175-187 (THSFHQSQHRKSS). Serine 181 is modified (phosphoserine). A Glycyl lysine isopeptide (Lys-Gly) (interchain with G-Cter in SUMO2) cross-link involves residue lysine 194. A compositionally biased stretch (basic and acidic residues) spans 195 to 208 (RQNEAIRGRGKERS). Serine 211 bears the Phosphoserine mark. Lysine 213 is covalently cross-linked (Glycyl lysine isopeptide (Lys-Gly) (interchain with G-Cter in SUMO2)). Phosphoserine occurs at positions 215 and 219. The segment covering 217–230 (DASPSSSSAVASSK) has biased composition (low complexity). Over residues 231 to 260 (ALDKPSRLTEKELAEAESKWANETLEKSDE) the composition is skewed to basic and acidic residues. Lysine 241 is covalently cross-linked (Glycyl lysine isopeptide (Lys-Gly) (interchain with G-Cter in SUMO2)). At lysine 249 the chain carries N6-acetyllysine; alternate. Residue lysine 249 forms a Glycyl lysine isopeptide (Lys-Gly) (interchain with G-Cter in SUMO2); alternate linkage. Position 339 is a phosphoserine (serine 339). Residue lysine 342 forms a Glycyl lysine isopeptide (Lys-Gly) (interchain with G-Cter in SUMO2) linkage.

In terms of assembly, homodimer. Component of the HUSH complex; at least composed of TASOR, PPHLN1 and MPHOSPH8. Interacts with SIN3A and HDAC1. May interact with PPL. In terms of tissue distribution, ubiquitously expressed. Strong expression in the developing somites and limbs, the embryonic nervous system and the adult brain.

Its subcellular location is the nucleus. It localises to the cytoplasm. It is found in the chromosome. Its function is as follows. Component of the HUSH complex, a multiprotein complex that mediates epigenetic repression. The HUSH complex is recruited to genomic loci rich in H3K9me3 and is probably required to maintain transcriptional silencing by promoting recruitment of SETDB1, a histone methyltransferase that mediates further deposition of H3K9me3. In the HUSH complex, contributes to the maintenance of the complex at chromatin. Acts as a transcriptional corepressor and regulates the cell cycle, probably via the HUSH complex. The HUSH complex is also involved in the silencing of unintegrated retroviral DNA: some part of the retroviral DNA formed immediately after infection remains unintegrated in the host genome and is transcriptionally repressed. May be involved in epithelial differentiation by contributing to epidermal integrity and barrier formation. This Mus musculus (Mouse) protein is Periphilin-1.